Here is a 192-residue protein sequence, read N- to C-terminus: Pyridoxal 5'-phosphate synthase subunit PdxT (192 aa).

Residue Gly46–Ser48 participates in L-glutamine binding. Residue Cys75 is the Nucleophile of the active site. Residues Arg101 and Ile129–Arg130 each bind L-glutamine. Catalysis depends on charge relay system residues His166 and Glu168.

Belongs to the glutaminase PdxT/SNO family. In terms of assembly, in the presence of PdxS, forms a dodecamer of heterodimers. Only shows activity in the heterodimer.

The enzyme catalyses aldehydo-D-ribose 5-phosphate + D-glyceraldehyde 3-phosphate + L-glutamine = pyridoxal 5'-phosphate + L-glutamate + phosphate + 3 H2O + H(+). It catalyses the reaction L-glutamine + H2O = L-glutamate + NH4(+). Its pathway is cofactor biosynthesis; pyridoxal 5'-phosphate biosynthesis. In terms of biological role, catalyzes the hydrolysis of glutamine to glutamate and ammonia as part of the biosynthesis of pyridoxal 5'-phosphate. The resulting ammonia molecule is channeled to the active site of PdxS. This is Pyridoxal 5'-phosphate synthase subunit PdxT from Staphylococcus carnosus (strain TM300).